The sequence spans 391 residues: Na(+)/H(+) antiporter NhaA (391 aa).

11 consecutive transmembrane segments (helical) span residues alanine 14–leucine 34, leucine 59–valine 79, serine 95–phenylalanine 115, valine 124–leucine 144, valine 154–phenylalanine 174, threonine 177–leucine 197, leucine 213–isoleucine 233, phenylalanine 261–leucine 281, isoleucine 292–valine 312, valine 331–valine 351, and leucine 363–valine 383.

Belongs to the NhaA Na(+)/H(+) (TC 2.A.33) antiporter family.

It is found in the cell inner membrane. The enzyme catalyses Na(+)(in) + 2 H(+)(out) = Na(+)(out) + 2 H(+)(in). In terms of biological role, na(+)/H(+) antiporter that extrudes sodium in exchange for external protons. This is Na(+)/H(+) antiporter NhaA from Shewanella pealeana (strain ATCC 700345 / ANG-SQ1).